A 226-amino-acid polypeptide reads, in one-letter code: Enolase-phosphatase E1 (226 aa).

It belongs to the HAD-like hydrolase superfamily. MasA/MtnC family. In terms of assembly, monomer. Mg(2+) is required as a cofactor.

It carries out the reaction 5-methylsulfanyl-2,3-dioxopentyl phosphate + H2O = 1,2-dihydroxy-5-(methylsulfanyl)pent-1-en-3-one + phosphate. Its pathway is amino-acid biosynthesis; L-methionine biosynthesis via salvage pathway; L-methionine from S-methyl-5-thio-alpha-D-ribose 1-phosphate: step 3/6. The protein operates within amino-acid biosynthesis; L-methionine biosynthesis via salvage pathway; L-methionine from S-methyl-5-thio-alpha-D-ribose 1-phosphate: step 4/6. In terms of biological role, bifunctional enzyme that catalyzes the enolization of 2,3-diketo-5-methylthiopentyl-1-phosphate (DK-MTP-1-P) into the intermediate 2-hydroxy-3-keto-5-methylthiopentenyl-1-phosphate (HK-MTPenyl-1-P), which is then dephosphorylated to form the acireductone 1,2-dihydroxy-3-keto-5-methylthiopentene (DHK-MTPene). The protein is Enolase-phosphatase E1 of Shewanella sp. (strain W3-18-1).